The sequence spans 65 residues: Small ribosomal subunit protein bS21 (65 aa).

This sequence belongs to the bacterial ribosomal protein bS21 family.

This is Small ribosomal subunit protein bS21 from Thermodesulfovibrio yellowstonii (strain ATCC 51303 / DSM 11347 / YP87).